The following is a 624-amino-acid chain: MSRFWHFKKFYFSSCFSKQRMSRRIIKNELLVPMKVTSKHEQEQPITNDEPRSLLSEDANPSPDVESEPELESEQSENREDVHEIIRSMVLGTGTTLPRLSNDSLTGIYNYWKLNPNDDLPLYNPTKYTPFEFHSQYNQDRSYISTPRLSVTKLLVFSWCELRSFYQVYSGSVRLPSTQAMTQGTKLHSKLEAEIHPEIDTTEIEQFLLSNAMSLGELQKAVPIEEDKVVFYLGEVERLAVDWAEMLIERLFSLIMGAEAREILLHGYLNFNNRSFVTNKDEIRDPSSVLVSGIVDYVKLQNLTNPSDGTLFDDIHGFVDDNFDQVDNVPLVDLSKFLPEAKQILQHYDFRLTFTDVKTRSAPQIPRQESVLEAAKFQTFYYRHFFQLLSRDSRFTYFSLIENAERRGHDVDKPLSILTTICLLRKHYHILFKDFVRLANGEPIGFAPFDDSAKSMAYDFVSVFQSSDEFSLANPNHTHFFEQLREIDGIEYDSILSPLLKVWKTPPTLRYLAARASQLFGVFEENLGDVTSVEYRLNKTSQLLSENVYEYDFSEFQVEVESASKFWNGEREAVPTEDLSRCSFCEFQSKCMVAGGNTTEAVEKKTIGPKIRHFLNECESSSKG.

The N-terminal 61 residues, 1-61 (MSRFWHFKKF…RSLLSEDANP (61 aa)), are a transit peptide targeting the mitochondrion. Residues 37–80 (TSKHEQEQPITNDEPRSLLSEDANPSPDVESEPELESEQSENRE) are disordered. Acidic residues predominate over residues 65–75 (VESEPELESEQ). C160, C582, C585, and C591 together coordinate [4Fe-4S] cluster.

This sequence belongs to the EXO5 family. Monomer. It depends on Mg(2+) as a cofactor. Requires [4Fe-4S] cluster as cofactor.

Its subcellular location is the mitochondrion. Functionally, single strand DNA specific 5'exonuclease involved in mitochondrial DNA replication and recombination. Releases dinucleotides as main products of catalysis. Has the capacity to slide across 5'double-stranded DNA or 5'RNA sequences and resumes cutting two nucleotides downstream of the double-stranded-to-single-stranded junction or RNA-to-DNA junction, respectively. In Candida dubliniensis (strain CD36 / ATCC MYA-646 / CBS 7987 / NCPF 3949 / NRRL Y-17841) (Yeast), this protein is Exonuclease V, mitochondrial (EXO5).